The following is a 435-amino-acid chain: Nucleosome assembly protein 1 (435 aa).

The interval 1–51 is disordered; that stretch reads MTEQPINTKKKNGDISKAPTPQNTPASVTNSYMRSKPPTVSTIQESNNEDG. A Phosphoserine modification is found at Ser16. Residues 19–50 are compositionally biased toward polar residues; sequence PTPQNTPASVTNSYMRSKPPTVSTIQESNNED. Phosphothreonine is present on residues Thr20 and Thr24. Ser27 carries the post-translational modification Phosphoserine. Thr29 carries the post-translational modification Phosphothreonine. Ser31 and Ser35 each carry phosphoserine. Phosphothreonine is present on Thr42. Ser46 is modified (phosphoserine). Thr52 bears the Phosphothreonine mark. 2 stretches are compositionally biased toward acidic residues: residues 146–185 and 338–355; these read PTVEEIEEGQQLEEEEKGIDKEDGEEEEEEEEDDEEEDEQ and EANDDDEGEEGDEEDEEL. 2 disordered regions span residues 146–187 and 308–435; these read PTVE…EQGI and ESFF…CKQQ. The span at 356–374 shows a compositional bias: basic and acidic residues; that stretch reads EARLELDYQLGEEIKDRLI. Over residues 386-421 the composition is skewed to acidic residues; it reads VDFDYPELEGEGDEDEYSDEDGEGDSDDDDDDDDEA.

This sequence belongs to the nucleosome assembly protein (NAP) family. Component of the GIN4 complex which forms a ring at the bud neck. Phosphorylation is cell cycle dependent and is important for its bud neck localization. Phosphorylation is highest in newly collected G1 cells, declines when the cells are traversing through the G1 phase, and reaches the lowest level around the time of bud emergence. Phosphorylation increases and remains high through the rest of the cell cycle until the beginning of the next one, when it decreases again. Phosphorylation involves two septin ring-associated kinases, CLA4 and GIN4, and its dephosphorylation occurs at the septin ring in a manner dependent on the phosphatases PP2A and CDC14.

Its subcellular location is the bud neck. It is found in the bud tip. In terms of biological role, acidic protein, which assembles histones into an octamer. Involved in the regulation of the localization and the function of the septins during mitosis. In Candida albicans (strain SC5314 / ATCC MYA-2876) (Yeast), this protein is Nucleosome assembly protein 1 (NAP1).